A 430-amino-acid chain; its full sequence is Adenylosuccinate synthetase (430 aa).

GTP contacts are provided by residues 12–18 (GDEGKGK) and 40–42 (GHT). D13 functions as the Proton acceptor in the catalytic mechanism. Mg(2+)-binding residues include D13 and G40. IMP is bound by residues 13 to 16 (DEGK), 38 to 41 (NAGH), T130, R144, Q224, T239, and R303. H41 (proton donor) is an active-site residue. 299-305 (VVTGRPR) provides a ligand contact to substrate. GTP contacts are provided by residues R305, 331–333 (KLD), and 413–415 (STS).

Belongs to the adenylosuccinate synthetase family. In terms of assembly, homodimer. The cofactor is Mg(2+).

Its subcellular location is the cytoplasm. The enzyme catalyses IMP + L-aspartate + GTP = N(6)-(1,2-dicarboxyethyl)-AMP + GDP + phosphate + 2 H(+). It functions in the pathway purine metabolism; AMP biosynthesis via de novo pathway; AMP from IMP: step 1/2. Functionally, plays an important role in the de novo pathway of purine nucleotide biosynthesis. Catalyzes the first committed step in the biosynthesis of AMP from IMP. The polypeptide is Adenylosuccinate synthetase (Azorhizobium caulinodans (strain ATCC 43989 / DSM 5975 / JCM 20966 / LMG 6465 / NBRC 14845 / NCIMB 13405 / ORS 571)).